The following is a 322-amino-acid chain: tRNA U34 carboxymethyltransferase (322 aa).

Residues K90, W104, K109, G129, 151–153 (DPS), 180–181 (IE), M196, Y200, and R315 contribute to the carboxy-S-adenosyl-L-methionine site.

Belongs to the class I-like SAM-binding methyltransferase superfamily. CmoB family. In terms of assembly, homotetramer.

It carries out the reaction carboxy-S-adenosyl-L-methionine + 5-hydroxyuridine(34) in tRNA = 5-carboxymethoxyuridine(34) in tRNA + S-adenosyl-L-homocysteine + H(+). Its function is as follows. Catalyzes carboxymethyl transfer from carboxy-S-adenosyl-L-methionine (Cx-SAM) to 5-hydroxyuridine (ho5U) to form 5-carboxymethoxyuridine (cmo5U) at position 34 in tRNAs. The chain is tRNA U34 carboxymethyltransferase from Cellvibrio japonicus (strain Ueda107) (Pseudomonas fluorescens subsp. cellulosa).